The following is a 353-amino-acid chain: Alanine racemase (353 aa).

Catalysis depends on K33, which acts as the Proton acceptor; specific for D-alanine. Residue K33 is modified to N6-(pyridoxal phosphate)lysine. Substrate is bound at residue R129. The Proton acceptor; specific for L-alanine role is filled by Y250. Position 298 (M298) interacts with substrate.

It belongs to the alanine racemase family. Requires pyridoxal 5'-phosphate as cofactor.

It carries out the reaction L-alanine = D-alanine. Its pathway is amino-acid biosynthesis; D-alanine biosynthesis; D-alanine from L-alanine: step 1/1. Functionally, catalyzes the interconversion of L-alanine and D-alanine. May also act on other amino acids. This chain is Alanine racemase (alr), found in Azoarcus sp. (strain BH72).